Here is a 573-residue protein sequence, read N- to C-terminus: Protein FAM200A (573 aa).

Residues 1-51 (MTPESRDTTDLSPGGTQEMEGIVIVKVEEEDEEDHFQKERNKVESSPQVLS) form a disordered region. Topologically, residues 1–513 (MTPESRDTTD…DDFPLLSRKS (513 aa)) are extracellular. The helical transmembrane segment at 514 to 533 (ILLLLPFTTTYLCELGFSIL) threads the bilayer. Residues 534–573 (TRLKTKKRNRLNSAPDMRVALSSCVPDWKELMNRQAHPSH) lie on the Cytoplasmic side of the membrane.

The protein belongs to the FAM200 family.

The protein localises to the membrane. The protein is Protein FAM200A (FAM200A) of Homo sapiens (Human).